The primary structure comprises 301 residues: Haloalkane dehalogenase (301 aa).

In terms of domain architecture, AB hydrolase-1 spans 47–284 (PPIVLLHGEP…INASHFIQED (238 aa)). Asp123 serves as the catalytic Nucleophile. Catalysis depends on Asp250, which acts as the Proton donor. His279 functions as the Proton acceptor in the catalytic mechanism.

The protein belongs to the haloalkane dehalogenase family. Type 1 subfamily. Monomer.

It carries out the reaction 1-haloalkane + H2O = a halide anion + a primary alcohol + H(+). Catalyzes hydrolytic cleavage of carbon-halogen bonds in halogenated aliphatic compounds, leading to the formation of the corresponding primary alcohols, halide ions and protons. In Mycolicibacterium paratuberculosis (strain ATCC BAA-968 / K-10) (Mycobacterium paratuberculosis), this protein is Haloalkane dehalogenase.